A 73-amino-acid chain; its full sequence is Cell division protein ZapB (73 aa).

Residues 3 to 66 (LELLSKLETK…SWNEKVTGLV (64 aa)) adopt a coiled-coil conformation.

The protein belongs to the ZapB family. As to quaternary structure, homodimer. The ends of the coiled-coil dimer bind to each other, forming polymers. Interacts with FtsZ.

The protein resides in the cytoplasm. In terms of biological role, non-essential, abundant cell division factor that is required for proper Z-ring formation. It is recruited early to the divisome by direct interaction with FtsZ, stimulating Z-ring assembly and thereby promoting cell division earlier in the cell cycle. Its recruitment to the Z-ring requires functional FtsA or ZipA. This chain is Cell division protein ZapB, found in Shewanella baltica (strain OS223).